Here is a 286-residue protein sequence, read N- to C-terminus: 4-diphosphocytidyl-2-C-methyl-D-erythritol kinase (286 aa).

Lys11 is a catalytic residue. Residue 94–104 (PMGGGIGGGSS) participates in ATP binding. The active site involves Asp136.

Belongs to the GHMP kinase family. IspE subfamily.

The catalysed reaction is 4-CDP-2-C-methyl-D-erythritol + ATP = 4-CDP-2-C-methyl-D-erythritol 2-phosphate + ADP + H(+). Its pathway is isoprenoid biosynthesis; isopentenyl diphosphate biosynthesis via DXP pathway; isopentenyl diphosphate from 1-deoxy-D-xylulose 5-phosphate: step 3/6. Functionally, catalyzes the phosphorylation of the position 2 hydroxy group of 4-diphosphocytidyl-2C-methyl-D-erythritol. This is 4-diphosphocytidyl-2-C-methyl-D-erythritol kinase from Pseudomonas putida (strain GB-1).